The chain runs to 318 residues: 4-diphosphocytidyl-2-C-methyl-D-erythritol kinase (318 aa).

The active site involves K13. Position 101-111 (101-111) interacts with ATP; it reads PVAGGMAGGSA. Residue D143 is part of the active site. Residues 298–318 are disordered; it reads PGARLVTDDRADRPTPPQVHA.

Belongs to the GHMP kinase family. IspE subfamily.

The catalysed reaction is 4-CDP-2-C-methyl-D-erythritol + ATP = 4-CDP-2-C-methyl-D-erythritol 2-phosphate + ADP + H(+). It functions in the pathway isoprenoid biosynthesis; isopentenyl diphosphate biosynthesis via DXP pathway; isopentenyl diphosphate from 1-deoxy-D-xylulose 5-phosphate: step 3/6. In terms of biological role, catalyzes the phosphorylation of the position 2 hydroxy group of 4-diphosphocytidyl-2C-methyl-D-erythritol. The sequence is that of 4-diphosphocytidyl-2-C-methyl-D-erythritol kinase from Saccharopolyspora erythraea (strain ATCC 11635 / DSM 40517 / JCM 4748 / NBRC 13426 / NCIMB 8594 / NRRL 2338).